Reading from the N-terminus, the 326-residue chain is N-(2-amino-2-carboxyethyl)-L-glutamate synthase (326 aa).

Lysine 47 carries the N6-(pyridoxal phosphate)lysine modification. Pyridoxal 5'-phosphate is bound by residues asparagine 77, 185–189 (STTGS), and serine 272.

The protein belongs to the cysteine synthase/cystathionine beta-synthase family. SbnA subfamily. As to quaternary structure, homodimer. The cofactor is pyridoxal 5'-phosphate.

It catalyses the reaction O-phospho-L-serine + L-glutamate = N-[(2S)-2-amino-2-carboxyethyl]-L-glutamate + phosphate + H(+). It functions in the pathway siderophore biosynthesis. Functionally, catalyzes the synthesis of N-((2S)-2-amino-2-carboxyethyl)-L-glutamate (ACEGA) from O-phospho-L-serine and L-glutamate. Involved in the biosynthesis of L-2,3-diaminopropionic acid (L-Dap), a precursor of staphyloferrin B and antibiotics. This Staphylococcus aureus (strain bovine RF122 / ET3-1) protein is N-(2-amino-2-carboxyethyl)-L-glutamate synthase (sbnA).